The chain runs to 136 residues: Nuclear receptor 2C2-associated protein (136 aa).

This sequence belongs to the NR2C2AP family.

The protein localises to the nucleus. Its function is as follows. May act as a repressor of nr2c2-mediated transactivation by suppressing the binding between nr2c2 and its response element in target genes. The polypeptide is Nuclear receptor 2C2-associated protein (nr2c2ap) (Xenopus tropicalis (Western clawed frog)).